Here is a 441-residue protein sequence, read N- to C-terminus: ATP-dependent protease ATPase subunit HslU (441 aa).

ATP contacts are provided by residues Ile18, 60-65 (GVGKTE), Asp254, Glu319, and Arg391.

The protein belongs to the ClpX chaperone family. HslU subfamily. As to quaternary structure, a double ring-shaped homohexamer of HslV is capped on each side by a ring-shaped HslU homohexamer. The assembly of the HslU/HslV complex is dependent on binding of ATP.

Its subcellular location is the cytoplasm. ATPase subunit of a proteasome-like degradation complex; this subunit has chaperone activity. The binding of ATP and its subsequent hydrolysis by HslU are essential for unfolding of protein substrates subsequently hydrolyzed by HslV. HslU recognizes the N-terminal part of its protein substrates and unfolds these before they are guided to HslV for hydrolysis. This Shewanella sediminis (strain HAW-EB3) protein is ATP-dependent protease ATPase subunit HslU.